The following is an 864-amino-acid chain: Leucine--tRNA ligase (864 aa).

Positions 42 to 52 (PYPSGKLHMGH) match the 'HIGH' region motif. Positions 624 to 628 (KMSKS) match the 'KMSKS' region motif. Lysine 627 contacts ATP.

It belongs to the class-I aminoacyl-tRNA synthetase family.

The protein localises to the cytoplasm. It catalyses the reaction tRNA(Leu) + L-leucine + ATP = L-leucyl-tRNA(Leu) + AMP + diphosphate. The polypeptide is Leucine--tRNA ligase (Burkholderia cenocepacia (strain ATCC BAA-245 / DSM 16553 / LMG 16656 / NCTC 13227 / J2315 / CF5610) (Burkholderia cepacia (strain J2315))).